A 449-amino-acid polypeptide reads, in one-letter code: Amidophosphoribosyltransferase (449 aa).

A propeptide spanning residues Met-1–Lys-9 is cleaved from the precursor. The Nucleophile role is filled by Cys-10. Positions Cys-10–Gly-224 constitute a Glutamine amidotransferase type-2 domain. Cys-239 contacts [4Fe-4S] cluster. Ser-286, Asp-346, and Asp-347 together coordinate Mg(2+). [4Fe-4S] cluster-binding residues include Cys-383, Cys-432, and Cys-435.

The protein in the C-terminal section; belongs to the purine/pyrimidine phosphoribosyltransferase family. Mg(2+) is required as a cofactor. The cofactor is [4Fe-4S] cluster.

It carries out the reaction 5-phospho-beta-D-ribosylamine + L-glutamate + diphosphate = 5-phospho-alpha-D-ribose 1-diphosphate + L-glutamine + H2O. The protein operates within purine metabolism; IMP biosynthesis via de novo pathway; N(1)-(5-phospho-D-ribosyl)glycinamide from 5-phospho-alpha-D-ribose 1-diphosphate: step 1/2. In terms of biological role, catalyzes the formation of phosphoribosylamine from phosphoribosylpyrophosphate (PRPP) and glutamine. The chain is Amidophosphoribosyltransferase from Pyrococcus horikoshii (strain ATCC 700860 / DSM 12428 / JCM 9974 / NBRC 100139 / OT-3).